Here is a 934-residue protein sequence, read N- to C-terminus: Serine/threonine-protein kinase PknD (934 aa).

One can recognise a Protein kinase domain in the interval 4–296 (YELIRLIGKG…ELRQALQPYL (293 aa)). ATP-binding positions include 10–18 (IGKGGMGEV) and lysine 33. The active-site Proton acceptor is aspartate 138.

This sequence belongs to the protein kinase superfamily. Ser/Thr protein kinase family. In terms of assembly, interacts with Pkn1. Post-translationally, autophosphorylated on serine and threonine residues.

It catalyses the reaction L-seryl-[protein] + ATP = O-phospho-L-seryl-[protein] + ADP + H(+). The catalysed reaction is L-threonyl-[protein] + ATP = O-phospho-L-threonyl-[protein] + ADP + H(+). Its function is as follows. Together with the serine/threonine kinase Pkn1, may play a role in the specific interactions with host proteins during intracellular growth. Autophosphorylates and also phosphorylates Pkn1. The sequence is that of Serine/threonine-protein kinase PknD from Chlamydia trachomatis serovar D (strain ATCC VR-885 / DSM 19411 / UW-3/Cx).